The following is a 475-amino-acid chain: Chromosomal replication initiator protein DnaA (475 aa).

The tract at residues 1–73 (MTNSEQERWS…LSCWQAEMPE (73 aa)) is domain I, interacts with DnaA modulators. The interval 73 to 131 (EVHRIDLSVRTAMRCATPAKEAPVAVEARRAERGDAKPADTRAPVMTPVAASHDALGGS) is domain II. The tract at residues 132–354 (PLDPRLTFAS…GAINRLLAHS (223 aa)) is domain III, AAA+ region. ATP is bound by residues Gly179, Gly181, Lys182, and Thr183. The interval 355–475 (KLNNQPVTLD…VEALKRQLQD (121 aa)) is domain IV, binds dsDNA.

Belongs to the DnaA family. In terms of assembly, oligomerizes as a right-handed, spiral filament on DNA at oriC.

The protein resides in the cytoplasm. In terms of biological role, plays an essential role in the initiation and regulation of chromosomal replication. ATP-DnaA binds to the origin of replication (oriC) to initiate formation of the DNA replication initiation complex once per cell cycle. Binds the DnaA box (a 9 base pair repeat at the origin) and separates the double-stranded (ds)DNA. Forms a right-handed helical filament on oriC DNA; dsDNA binds to the exterior of the filament while single-stranded (ss)DNA is stabiized in the filament's interior. The ATP-DnaA-oriC complex binds and stabilizes one strand of the AT-rich DNA unwinding element (DUE), permitting loading of DNA polymerase. After initiation quickly degrades to an ADP-DnaA complex that is not apt for DNA replication. Binds acidic phospholipids. The protein is Chromosomal replication initiator protein DnaA of Bradyrhizobium sp. (strain BTAi1 / ATCC BAA-1182).